The primary structure comprises 373 residues: Dual-specificity RNA methyltransferase RlmN (373 aa).

The active-site Proton acceptor is the E94. The region spanning 100–339 is the Radical SAM core domain; the sequence is EDDRATLCVS…VTIRKTRGDD (240 aa). C107 and C344 are oxidised to a cystine. Residues C114, C118, and C121 each coordinate [4Fe-4S] cluster. S-adenosyl-L-methionine-binding positions include 168-169, S200, 222-224, and N301; these read GE and SLH. Residue C344 is the S-methylcysteine intermediate of the active site.

Belongs to the radical SAM superfamily. RlmN family. [4Fe-4S] cluster serves as cofactor.

Its subcellular location is the cytoplasm. It catalyses the reaction adenosine(2503) in 23S rRNA + 2 reduced [2Fe-2S]-[ferredoxin] + 2 S-adenosyl-L-methionine = 2-methyladenosine(2503) in 23S rRNA + 5'-deoxyadenosine + L-methionine + 2 oxidized [2Fe-2S]-[ferredoxin] + S-adenosyl-L-homocysteine. The enzyme catalyses adenosine(37) in tRNA + 2 reduced [2Fe-2S]-[ferredoxin] + 2 S-adenosyl-L-methionine = 2-methyladenosine(37) in tRNA + 5'-deoxyadenosine + L-methionine + 2 oxidized [2Fe-2S]-[ferredoxin] + S-adenosyl-L-homocysteine. Functionally, specifically methylates position 2 of adenine 2503 in 23S rRNA and position 2 of adenine 37 in tRNAs. m2A2503 modification seems to play a crucial role in the proofreading step occurring at the peptidyl transferase center and thus would serve to optimize ribosomal fidelity. The chain is Dual-specificity RNA methyltransferase RlmN from Vibrio cholerae serotype O1 (strain M66-2).